Consider the following 513-residue polypeptide: Cyclin-dependent kinase C-2 (513 aa).

The Protein kinase domain occupies 26-325 (FEKLEQIGEG…AKDALDAEYF (300 aa)). ATP-binding positions include 32–40 (IGEGTYGQV) and lysine 55. Tyrosine 37 bears the Phosphotyrosine mark. Aspartate 164 serves as the catalytic Proton acceptor. Threonine 198 bears the Phosphothreonine mark. Residues 337 to 513 (LPTYESSHEF…ARNQQYGWQP (177 aa)) are disordered. Residues 395-404 (AGPNHPMNNN) are compositionally biased toward low complexity. The segment covering 434 to 448 (SGNQTGGYNNQSRGG) has biased composition (polar residues). Gly residues-rich tracts occupy residues 461–476 (APYGAGPRGPSGGYGV) and 483–496 (QGGGQYGGSGGSGR).

Belongs to the protein kinase superfamily. CMGC Ser/Thr protein kinase family. CDC2/CDKX subfamily. In terms of assembly, interacts with CYCT1-3. Highly expressed in flowers. Expressed in seedlings, roots, rosettes and stems.

The catalysed reaction is L-seryl-[protein] + ATP = O-phospho-L-seryl-[protein] + ADP + H(+). It catalyses the reaction L-threonyl-[protein] + ATP = O-phospho-L-threonyl-[protein] + ADP + H(+). The enzyme catalyses [DNA-directed RNA polymerase] + ATP = phospho-[DNA-directed RNA polymerase] + ADP + H(+). The chain is Cyclin-dependent kinase C-2 (CDKC-2) from Arabidopsis thaliana (Mouse-ear cress).